A 570-amino-acid polypeptide reads, in one-letter code: Proline--tRNA ligase (570 aa).

The protein belongs to the class-II aminoacyl-tRNA synthetase family. ProS type 1 subfamily. In terms of assembly, homodimer.

The protein resides in the cytoplasm. The enzyme catalyses tRNA(Pro) + L-proline + ATP = L-prolyl-tRNA(Pro) + AMP + diphosphate. Functionally, catalyzes the attachment of proline to tRNA(Pro) in a two-step reaction: proline is first activated by ATP to form Pro-AMP and then transferred to the acceptor end of tRNA(Pro). As ProRS can inadvertently accommodate and process non-cognate amino acids such as alanine and cysteine, to avoid such errors it has two additional distinct editing activities against alanine. One activity is designated as 'pretransfer' editing and involves the tRNA(Pro)-independent hydrolysis of activated Ala-AMP. The other activity is designated 'posttransfer' editing and involves deacylation of mischarged Ala-tRNA(Pro). The misacylated Cys-tRNA(Pro) is not edited by ProRS. The polypeptide is Proline--tRNA ligase (Neisseria meningitidis serogroup C / serotype 2a (strain ATCC 700532 / DSM 15464 / FAM18)).